Consider the following 195-residue polypeptide: Segregation and condensation protein B (195 aa).

Belongs to the ScpB family. As to quaternary structure, homodimer. Homodimerization may be required to stabilize the binding of ScpA to the Smc head domains. Component of a cohesin-like complex composed of ScpA, ScpB and the Smc homodimer, in which ScpA and ScpB bind to the head domain of Smc. The presence of the three proteins is required for the association of the complex with DNA.

The protein resides in the cytoplasm. Its function is as follows. Participates in chromosomal partition during cell division. May act via the formation of a condensin-like complex containing Smc and ScpA that pull DNA away from mid-cell into both cell halves. This chain is Segregation and condensation protein B, found in Clostridium perfringens (strain SM101 / Type A).